The primary structure comprises 291 residues: Gamma-sarcoglycan (291 aa).

A helical; Signal-anchor for type II membrane protein transmembrane segment spans residues 38–58; that stretch reads LFVLLLLIILLVNFALTIWIL. At 59-291 the chain is on the extracellular side; sequence KVMWFSPTGM…TCHEHSHICL (233 aa). N-linked (GlcNAc...) asparagine glycosylation occurs at Asn110. Intrachain disulfides connect Cys265–Cys290 and Cys267–Cys283.

It belongs to the sarcoglycan beta/delta/gamma/zeta family. In terms of assembly, interacts with the syntrophin SNTA1. Cross-link to form 2 major subcomplexes: one consisting of SGCB, SGCD and SGCG and the other consisting of SGCB and SGCD. The association between SGCB and SGCG is particularly strong while SGCA is loosely associated with the other sarcoglycans. Interacts with FLNC. In terms of processing, disulfide bonds are present.

It is found in the cell membrane. It localises to the sarcolemma. Its subcellular location is the cytoplasm. The protein resides in the cytoskeleton. In terms of biological role, component of the sarcoglycan complex, a subcomplex of the dystrophin-glycoprotein complex which forms a link between the F-actin cytoskeleton and the extracellular matrix. This is Gamma-sarcoglycan (SGCG) from Canis lupus familiaris (Dog).